Reading from the N-terminus, the 589-residue chain is Chromodomain Y-like protein (589 aa).

Residues 1–10 show a composition bias toward polar residues; sequence MGLGSSQPST. The disordered stretch occupies residues 1–57; sequence MGLGSSQPSTKEAEPCTLQEKEEHPVDDTRQQNNAVPATVSDPDQVSPAVQDAETQV. Positions 11 to 30 are enriched in basic and acidic residues; that stretch reads KEAEPCTLQEKEEHPVDDTR. Positions 55–115 constitute a Chromo domain; it reads TQVESIVDKR…RHNERQKEGT (61 aa). The tract at residues 55 to 300 is interaction with EZH2; it reads TQVESIVDKR…TIQTSVTGVT (246 aa). Position 82 is a phosphoserine (Ser82). Residues 110 to 155 are disordered; that stretch reads RQKEGTLARANRASPSNARKQISRSTHSALSKTNPKALVVGKDHES. Residues 117–128 are compositionally biased toward low complexity; sequence ARANRASPSNAR. Residue Lys129 is modified to N6,N6,N6-trimethyllysine; by EHMT2; alternate. Lys129 is modified (N6,N6-dimethyllysine; by EHMT2; alternate). An N6-methyllysine; by EHMT2; alternate modification is found at Lys129. Over residues 132-143 the composition is skewed to polar residues; it reads SRSTHSALSKTN. Residues Ser164, Ser195, and Ser210 each carry the phosphoserine modification. The disordered stretch occupies residues 202 to 224; sequence SIDGFHGESPEKLDQGAEDTVTP. The segment covering 206–216 has biased composition (basic and acidic residues); sequence FHGESPEKLDQ. The acetyl-CoA-binding domain stretch occupies residues 353–585; the sequence is SENNSLNPEV…DSMLKYLQRK (233 aa).

As to quaternary structure, forms multimers and multimerization is required for stable binding to chromatin. Interacts with HDAC1 and HDAC2 via its C-terminal acetyl-CoA-binding domain. Interacts with EZH2, EED, SUZ12, REST, EHMT1 and EHMT2. Part of a complex containing at least CDYL, REST, WIZ, SETB1, EHMT1 and EHMT2. Part of a complex containing at least CDYL, MIER1, MIER2, HDAC1 and HDAC2. Interacts with CHAF1A and CHAF1B; bridging the CAF-1 complex to the MCM2-7 (MCM) complex. Interacts with MCM3 and MCM5; bridging the CAF-1 complex to the MCM2-7 (MCM) complex. Recruited to Xist RNA-coated X chromosome. Interacts with EHMT2 and PRDM9; interaction only takes place when PRDM9 is bound to hotspot DNA. As to expression, expressed in the brain, with expression in the hippocampal dentate gyrus, CA1, striatum and cortex (at protein level). Expressed in the prelimbic cortex.

The protein localises to the nucleus. Its subcellular location is the chromosome. The enzyme catalyses 3-hydroxybutanoyl-CoA = (2E)-butenoyl-CoA + H2O. Chromatin reader protein that recognizes and binds histone H3 trimethylated at 'Lys-9', dimethylated at 'Lys-27' and trimethylated at 'Lys-27' (H3K9me3, H3K27me2 and H3K27me3, respectively). Part of multimeric repressive chromatin complexes, where it is required for transmission and restoration of repressive histone marks, thereby preserving the epigenetic landscape. Required for chromatin targeting and maximal enzymatic activity of Polycomb repressive complex 2 (PRC2); acts as a positive regulator of PRC2 activity by bridging the pre-existing histone H3K27me3 and newly recruited PRC2 on neighboring nucleosomes. Acts as a corepressor for REST by facilitating histone-lysine N-methyltransferase EHMT2 recruitment and H3K9 dimethylation at REST target genes for repression. Involved in X chromosome inactivation in females: recruited to Xist RNA-coated X chromosome and facilitates propagation of H3K9me2 by anchoring EHMT2. Promotes EZH2 accumulation and H3K27me3 methylation at DNA double strand breaks (DSBs), thereby facilitating transcriptional repression at sites of DNA damage and homology-directed repair of DSBs. Required for neuronal migration during brain development by repressing expression of RHOA. By repressing the expression of SCN8A, contributes to the inhibition of intrinsic neuronal excitability and epileptogenesis. In addition to acting as a chromatin reader, acts as a hydro-lyase. Shows crotonyl-coA hydratase activity by mediating the conversion of crotonyl-CoA ((2E)-butenoyl-CoA) to beta-hydroxybutyryl-CoA (3-hydroxybutanoyl-CoA), thereby acting as a negative regulator of histone crotonylation. Histone crotonylation is required during spermatogenesis; down-regulation of histone crotonylation by CDYL regulates the reactivation of sex chromosome-linked genes in round spermatids and histone replacement in elongating spermatids. By regulating histone crotonylation and trimethylation of H3K27, may be involved in stress-induced depression-like behaviors, possibly by regulating VGF expression. Displays acetyltransferase activity toward tubulin in vitro; such activity is however unsure in vivo and additional evidences would be required to confirm this result. Its function is as follows. Not able to recognize and bind histone H3K9me3, histone H3K27me2 and histone H3K27me3, due to the presence of a N-terminal extension that inactivates the chromo domain. The sequence is that of Chromodomain Y-like protein from Rattus norvegicus (Rat).